A 272-amino-acid chain; its full sequence is Phosphatidylglycerol--prolipoprotein diacylglyceryl transferase (272 aa).

The next 4 helical transmembrane spans lie at 15–35 (LGPLYVHMYSVFMLAGALVLF), 53–73 (AFAVTSLLIPVILGARLWHVV), 94–114 (GLGFIGGVFSGLICFFVIAKI), and 117–137 (VPPFTFLDALAPGILVALCFA). R138 provides a ligand contact to a 1,2-diacyl-sn-glycero-3-phospho-(1'-sn-glycerol). Helical transmembrane passes span 174–194 (FHPIFLYEIILNVFIIVILLV), 199–219 (VFVKTVFPKGSVFAAFLVLYG), and 237–257 (FGLDLNYVGAAAMIIVGVLIA).

This sequence belongs to the Lgt family.

The protein localises to the cell membrane. It carries out the reaction L-cysteinyl-[prolipoprotein] + a 1,2-diacyl-sn-glycero-3-phospho-(1'-sn-glycerol) = an S-1,2-diacyl-sn-glyceryl-L-cysteinyl-[prolipoprotein] + sn-glycerol 1-phosphate + H(+). The protein operates within protein modification; lipoprotein biosynthesis (diacylglyceryl transfer). Its function is as follows. Catalyzes the transfer of the diacylglyceryl group from phosphatidylglycerol to the sulfhydryl group of the N-terminal cysteine of a prolipoprotein, the first step in the formation of mature lipoproteins. The sequence is that of Phosphatidylglycerol--prolipoprotein diacylglyceryl transferase from Tropheryma whipplei (strain TW08/27) (Whipple's bacillus).